The sequence spans 226 residues: ATP synthase F(0) complex subunit a (226 aa).

6 helical membrane-spanning segments follow: residues 11–31, 68–88, 97–117, 138–158, 164–184, and 194–214; these read APTI…TLLI, WSLM…LGLL, QLSM…ITGL, IPML…ALAV, ITAG…LSTI, and VLLM…AYVF.

It belongs to the ATPase A chain family. In terms of assembly, component of the ATP synthase complex composed at least of ATP5F1A/subunit alpha, ATP5F1B/subunit beta, ATP5MC1/subunit c (homooctomer), MT-ATP6/subunit a, MT-ATP8/subunit 8, ATP5ME/subunit e, ATP5MF/subunit f, ATP5MG/subunit g, ATP5MK/subunit k, ATP5MJ/subunit j, ATP5F1C/subunit gamma, ATP5F1D/subunit delta, ATP5F1E/subunit epsilon, ATP5PF/subunit F6, ATP5PB/subunit b, ATP5PD/subunit d, ATP5PO/subunit OSCP. ATP synthase complex consists of a soluble F(1) head domain (subunits alpha(3) and beta(3)) - the catalytic core - and a membrane F(0) domain - the membrane proton channel (subunits c, a, 8, e, f, g, k and j). These two domains are linked by a central stalk (subunits gamma, delta, and epsilon) rotating inside the F1 region and a stationary peripheral stalk (subunits F6, b, d, and OSCP). Interacts with DNAJC30; interaction is direct.

It localises to the mitochondrion inner membrane. The enzyme catalyses H(+)(in) = H(+)(out). Subunit a, of the mitochondrial membrane ATP synthase complex (F(1)F(0) ATP synthase or Complex V) that produces ATP from ADP in the presence of a proton gradient across the membrane which is generated by electron transport complexes of the respiratory chain. ATP synthase complex consist of a soluble F(1) head domain - the catalytic core - and a membrane F(1) domain - the membrane proton channel. These two domains are linked by a central stalk rotating inside the F(1) region and a stationary peripheral stalk. During catalysis, ATP synthesis in the catalytic domain of F(1) is coupled via a rotary mechanism of the central stalk subunits to proton translocation. With the subunit c (ATP5MC1), forms the proton-conducting channel in the F(0) domain, that contains two crucial half-channels (inlet and outlet) that facilitate proton movement from the mitochondrial intermembrane space (IMS) into the matrix. Protons are taken up via the inlet half-channel and released through the outlet half-channel, following a Grotthuss mechanism. The protein is ATP synthase F(0) complex subunit a of Papio hamadryas (Hamadryas baboon).